The sequence spans 303 residues: uncharacterized protein (303 aa).

Its subcellular location is the cytoplasm. This is an uncharacterized protein from Saccharomyces cerevisiae (strain ATCC 204508 / S288c) (Baker's yeast).